We begin with the raw amino-acid sequence, 325 residues long: tRNA dimethylallyltransferase (325 aa).

16–23 is an ATP binding site; it reads GPTASGKT. 18-23 contacts substrate; that stretch reads TASGKT. 4 interaction with substrate tRNA regions span residues 41 to 44, 165 to 169, 253 to 258, and 286 to 293; these read DSAL, QRIQR, RCVGYR, and KRQITWLR.

This sequence belongs to the IPP transferase family. In terms of assembly, monomer. Mg(2+) is required as a cofactor.

It catalyses the reaction adenosine(37) in tRNA + dimethylallyl diphosphate = N(6)-dimethylallyladenosine(37) in tRNA + diphosphate. Catalyzes the transfer of a dimethylallyl group onto the adenine at position 37 in tRNAs that read codons beginning with uridine, leading to the formation of N6-(dimethylallyl)adenosine (i(6)A). The polypeptide is tRNA dimethylallyltransferase (Ralstonia pickettii (strain 12J)).